The chain runs to 214 residues: Thiopurine S-methyltransferase (214 aa).

The S-adenosyl-L-methionine site is built by W10, L44, E65, and R122.

The protein belongs to the class I-like SAM-binding methyltransferase superfamily. TPMT family.

It localises to the cytoplasm. The enzyme catalyses S-adenosyl-L-methionine + a thiopurine = S-adenosyl-L-homocysteine + a thiopurine S-methylether.. The protein is Thiopurine S-methyltransferase of Teredinibacter turnerae (strain ATCC 39867 / T7901).